The sequence spans 500 residues: Putative antiporter subunit mnhD2 (500 aa).

14 consecutive transmembrane segments (helical) span residues 2 to 22 (MSNL…ILVF), 32 to 52 (ILSI…LIYV), 78 to 98 (LSLL…AYGF), 108 to 128 (FHLP…FLTS), 130 to 150 (LFNL…LVTL), 161 to 181 (IVYV…IGML), 209 to 229 (ISLV…FMWL), 240 to 260 (LAAL…IRFF), 273 to 293 (TLLV…VIAY), 308 to 328 (IGFI…GAIF), 330 to 350 (LAND…LVYM), 368 to 388 (FFGV…PFSG), 403 to 423 (GNYI…YSLF), and 450 to 470 (GLLS…PVVL).

The protein belongs to the CPA3 antiporters (TC 2.A.63) subunit D family. In terms of assembly, may form a heterooligomeric complex that consists of seven subunits: mnhA2, mnhB2, mnhC2, mnhD2, mnhE2, mnhF2 and mnhG2.

It is found in the cell membrane. The polypeptide is Putative antiporter subunit mnhD2 (mnhD2) (Staphylococcus epidermidis (strain ATCC 12228 / FDA PCI 1200)).